A 308-amino-acid chain; its full sequence is CMP-N-acetylneuraminate:beta-galactoside alpha-2,3-sialyltransferase (308 aa).

The active-site Proton acceptor is D201. CMP-N-acetyl-beta-neuraminate is bound by residues L221–R225, F242–E243, and S262–S263. H223 serves as the catalytic Proton donor.

Belongs to the glycosyltransferase 52 family. The cofactor is Divalent metal cations are not required for the alpha-2,3-sialyltransferase activity..

Its function is as follows. Catalyzes the transfer of sialic acid from the substrate CMP-N-acetylneuraminate to lactosyl lipids as preferred acceptor substrates in vitro, forming alpha-2,3-linked sialosides. Beta-1,4-linked galactosyl lipids are better substrates than beta-1,3-linked galactosyl lipids. The natural acceptor substrate may be cell surface oligosaccharides in lipooligosaccharide (LOS), whose sialylation has been demonstrated vital for the virulence of P.multocida. The chain is CMP-N-acetylneuraminate:beta-galactoside alpha-2,3-sialyltransferase (lst) from Pasteurella multocida (strain Pm70).